Consider the following 500-residue polypeptide: Proline/betaine transporter (500 aa).

Over 1 to 37 (MLKRKKVKPITLRDVTIIDDGKLRKAITAASLGNAME) the chain is Cytoplasmic. Residues 38–58 (WFDFGVYGFVAYALGKVFFPG) traverse the membrane as a helical segment. Residues 59–65 (ADPSVQM) lie on the Periplasmic side of the membrane. Residues 66-86 (VAALATFSVPFLIRPLGGLFF) form a helical membrane-spanning segment. Residues 87–97 (GMLGDKYGRQK) are Cytoplasmic-facing. Residues 98–118 (ILAITIVIMSISTFCIGLIPS) traverse the membrane as a helical segment. The Periplasmic portion of the chain corresponds to 119–121 (YDT). A helical membrane pass occupies residues 122-142 (IGIWAPILLLICKMAQGFSVG). The Cytoplasmic portion of the chain corresponds to 143 to 169 (GEYTGASIFVAEYSPDRKRGFMGSWLD). Residues 170–190 (FGSIAGFVLGAGVVVLISTIV) traverse the membrane as a helical segment. Topologically, residues 191-194 (GEAN) are periplasmic. A helical membrane pass occupies residues 195 to 215 (FLDWGWRIPFFIALPLGIIGL). Topologically, residues 216 to 260 (YLRHALEETPAFQQHVDKLEQGDREGLQDGPKVSFKEIATKYWRS) are cytoplasmic. The chain crosses the membrane as a helical span at residues 261–281 (LLTCIGLVIATNVTYYMLLTY). Over 282–297 (MPSYLSHNLHYSEDHG) the chain is Periplasmic. Residues 298–318 (VLIIIAIMIGMLFVQPVMGLL) form a helical membrane-spanning segment. Residues 319–325 (SDRFGRR) lie on the Cytoplasmic side of the membrane. The chain crosses the membrane as a helical span at residues 326–346 (PFVLLGSVALFVLAIPAFILI). Topologically, residues 347-350 (NSNV) are periplasmic. A helical membrane pass occupies residues 351–371 (IGLIFAGLLMLAVILNCFTGV). Topologically, residues 372–390 (MASTLPAMFPTHIRYSALA) are cytoplasmic. A helical membrane pass occupies residues 391 to 411 (AAFNISVLVAGLTPTLAAWLV). The Periplasmic portion of the chain corresponds to 412–416 (ESSQN). A helical membrane pass occupies residues 417–437 (LMMPAYYLMVVAVVGLITGVT). Over 438-500 (MKETANRPLK…LVQQHPRIDE (63 aa)) the chain is Cytoplasmic. A coiled-coil region spans residues 453–498 (ASDIQEAKEILVEHYDNIEQKIDDIDHEIADLQAKRTRLVQQHPRI).

Belongs to the major facilitator superfamily. Metabolite:H+ Symporter (MHS) family (TC 2.A.1.6) family.

Its subcellular location is the cell inner membrane. Functionally, proton symporter that senses osmotic shifts and responds by importing osmolytes such as proline, glycine betaine, stachydrine, pipecolic acid, ectoine and taurine. It is both an osmosensor and an osmoregulator which is available to participate early in the bacterial osmoregulatory response. The protein is Proline/betaine transporter (proP) of Escherichia coli O157:H7.